The chain runs to 430 residues: Adenylosuccinate synthetase (430 aa).

GTP contacts are provided by residues 12–18 (GDEGKGK) and 40–42 (GHT). D13 acts as the Proton acceptor in catalysis. The Mg(2+) site is built by D13 and G40. Residues 13-16 (DEGK), 38-41 (NAGH), T128, R142, Q223, T238, and R302 contribute to the IMP site. The active-site Proton donor is the H41. 298-304 (TTTGRPR) contributes to the substrate binding site. Residues R304, 330 to 332 (SID), and 412 to 414 (SVG) contribute to the GTP site.

Belongs to the adenylosuccinate synthetase family. Homodimer. Mg(2+) serves as cofactor.

The protein resides in the cytoplasm. The catalysed reaction is IMP + L-aspartate + GTP = N(6)-(1,2-dicarboxyethyl)-AMP + GDP + phosphate + 2 H(+). It functions in the pathway purine metabolism; AMP biosynthesis via de novo pathway; AMP from IMP: step 1/2. Functionally, plays an important role in the de novo pathway of purine nucleotide biosynthesis. Catalyzes the first committed step in the biosynthesis of AMP from IMP. This chain is Adenylosuccinate synthetase, found in Streptococcus pyogenes serotype M49 (strain NZ131).